The primary structure comprises 527 residues: SusD-like protein P25 (527 aa).

The first 15 residues, 1-15 (MKIQNIIVYVFLIFS), serve as a signal peptide directing secretion. C16 is lipidated: N-palmitoyl cysteine. The S-diacylglycerol cysteine moiety is linked to residue C16.

It belongs to the SusD family.

It localises to the cell outer membrane. Functionally, polysaccharide-binding protein probably involved in ulvan degradation. Ulvan is the main polysaccharide component of the Ulvales (green seaweed) cell wall. It is composed of disaccharide building blocks comprising 3-sulfated rhamnose (Rha3S) linked to D-glucuronic acid (GlcA), L-iduronic acid (IduA), or D-xylose (Xyl). The SusD-like protein may mediate ulvan oligomer-binding before transport in the periplasm for further degradation. The polypeptide is SusD-like protein P25 (Formosa agariphila (strain DSM 15362 / KCTC 12365 / LMG 23005 / KMM 3901 / M-2Alg 35-1)).